Consider the following 173-residue polypeptide: Small ribosomal subunit protein uS5 (173 aa).

An S5 DRBM domain is found at 17 to 80 (WQERVIQIRR…ADGKKQLIEV (64 aa)).

This sequence belongs to the universal ribosomal protein uS5 family. Part of the 30S ribosomal subunit. Contacts proteins S4 and S8.

In terms of biological role, with S4 and S12 plays an important role in translational accuracy. Functionally, located at the back of the 30S subunit body where it stabilizes the conformation of the head with respect to the body. The sequence is that of Small ribosomal subunit protein uS5 from Microcystis aeruginosa (strain NIES-843 / IAM M-2473).